We begin with the raw amino-acid sequence, 212 residues long: Thymidylate kinase (212 aa).

10–17 (GLEGAGKS) is an ATP binding site.

This sequence belongs to the thymidylate kinase family.

It catalyses the reaction dTMP + ATP = dTDP + ADP. Its function is as follows. Phosphorylation of dTMP to form dTDP in both de novo and salvage pathways of dTTP synthesis. This chain is Thymidylate kinase, found in Vibrio cholerae serotype O1 (strain ATCC 39541 / Classical Ogawa 395 / O395).